The chain runs to 355 residues: Uroporphyrinogen decarboxylase (355 aa).

Substrate-binding positions include 27-31 (RQAGR), Phe-46, Asp-77, Tyr-154, Thr-209, and His-328.

Belongs to the uroporphyrinogen decarboxylase family. Homodimer.

The protein resides in the cytoplasm. The catalysed reaction is uroporphyrinogen III + 4 H(+) = coproporphyrinogen III + 4 CO2. Its pathway is porphyrin-containing compound metabolism; protoporphyrin-IX biosynthesis; coproporphyrinogen-III from 5-aminolevulinate: step 4/4. Functionally, catalyzes the decarboxylation of four acetate groups of uroporphyrinogen-III to yield coproporphyrinogen-III. The chain is Uroporphyrinogen decarboxylase from Vibrio vulnificus (strain CMCP6).